The sequence spans 347 residues: NADH-ubiquinone oxidoreductase chain 2 (347 aa).

The next 10 membrane-spanning stretches (helical) occupy residues 4-21 (LILS…LIVM), 26-45 (WLMV…PVLM), 59-79 (YFLT…INLI), 96-116 (IIMT…FWVP), 122-142 (IQLS…MSIL), 148-168 (AINM…GGWG), 201-221 (ALLN…TFML), 242-262 (TTIL…GFLP), 274-294 (DSII…YFYM), and 326-346 (LPPL…LMLL).

Belongs to the complex I subunit 2 family. In terms of assembly, core subunit of respiratory chain NADH dehydrogenase (Complex I) which is composed of 45 different subunits. Interacts with TMEM242.

It is found in the mitochondrion inner membrane. It catalyses the reaction a ubiquinone + NADH + 5 H(+)(in) = a ubiquinol + NAD(+) + 4 H(+)(out). Core subunit of the mitochondrial membrane respiratory chain NADH dehydrogenase (Complex I) which catalyzes electron transfer from NADH through the respiratory chain, using ubiquinone as an electron acceptor. Essential for the catalytic activity and assembly of complex I. This Syconycteris australis (Southern blossom bat) protein is NADH-ubiquinone oxidoreductase chain 2.